The following is a 189-amino-acid chain: ATP synthase subunit delta (189 aa).

The protein belongs to the ATPase delta chain family. As to quaternary structure, F-type ATPases have 2 components, F(1) - the catalytic core - and F(0) - the membrane proton channel. F(1) has five subunits: alpha(3), beta(3), gamma(1), delta(1), epsilon(1). F(0) has three main subunits: a(1), b(2) and c(10-14). The alpha and beta chains form an alternating ring which encloses part of the gamma chain. F(1) is attached to F(0) by a central stalk formed by the gamma and epsilon chains, while a peripheral stalk is formed by the delta and b chains.

It localises to the cell inner membrane. F(1)F(0) ATP synthase produces ATP from ADP in the presence of a proton or sodium gradient. F-type ATPases consist of two structural domains, F(1) containing the extramembraneous catalytic core and F(0) containing the membrane proton channel, linked together by a central stalk and a peripheral stalk. During catalysis, ATP synthesis in the catalytic domain of F(1) is coupled via a rotary mechanism of the central stalk subunits to proton translocation. Its function is as follows. This protein is part of the stalk that links CF(0) to CF(1). It either transmits conformational changes from CF(0) to CF(1) or is implicated in proton conduction. In Ehrlichia ruminantium (strain Gardel), this protein is ATP synthase subunit delta.